An 809-amino-acid polypeptide reads, in one-letter code: Origin of replication complex subunit 1A (809 aa).

The span at 1–47 (MASSLSSKAKTFKSPTKTPTKMYRKSYLSPSSTSLTPPQTPETLTPL) shows a compositional bias: low complexity. A disordered region spans residues 1-69 (MASSLSSKAK…LGNDPIDLPG (69 aa)). Residues 160–185 (DPEIEDCQICFKSHTNTIMIECDDCL) form a histone H3 binding region. The segment at 163–213 (IEDCQICFKSHTNTIMIECDDCLGGFHLNCLKPPLKEVPEGDWICQFCEVK) adopts a PHD-type zinc-finger fold. Zn(2+)-binding residues include C166, C169, C181, C184, H189, and C192. The segment at 201 to 205 (PEGDW) is histone H3 binding. Zn(2+)-binding residues include C207 and C210. Positions 223-341 (PKPPEGKKLA…VHWGSFKRVA (119 aa)) constitute a BAH domain. The segment at 316 to 321 (ASNDGD) is histone H3 binding. Positions 431–799 (PKSLPCRSKE…DDVAFALKDN (369 aa)) are necessary and sufficient for ORC complex assembly. ATP is bound by residues 466-473 (GVPGTGKT) and 466-474 (GVPGTGKTI). Mg(2+) is bound by residues D556 and E557. 3 residues coordinate ATP: E557, N590, and R655.

Belongs to the ORC1 family. In terms of assembly, component of the origin recognition complex (ORC) composed of at least ORC1 (ORC1A or ORC1B), ORC2, ORC3, ORC4, ORC5 and ORC6. ORC is regulated in a cell-cycle and development dependent manner. It is sequentially assembled at the exit from anaphase of mitosis and disassembled as cells enter S phase. Interacts directly with ORC2, ORC3, ORC4 and ORC5. Binds mostly unmodified histone H3, and, with lower efficiency, H3K4me1 H3K4me2 and H3K4me3. Follow a cell-cycle regulation with a peak at the G1/S-phase. Mostly expressed in siliques, flowers and flower buds, and, to a lower extent, in roots, leaves and stems.

Its subcellular location is the nucleus. In terms of biological role, essential protein. Component of the origin recognition complex (ORC) that binds origins of replication. It has a role in both chromosomal replication and mating type transcriptional silencing. Binds to the ARS consensus sequence (ACS) of origins of replication. H3K4me3 effector that positively regulates the transcription of a subset of genes. This is Origin of replication complex subunit 1A from Arabidopsis thaliana (Mouse-ear cress).